Reading from the N-terminus, the 339-residue chain is Anthranilate phosphoribosyltransferase (339 aa).

5-phospho-alpha-D-ribose 1-diphosphate is bound by residues Gly-82, 85-86, 92-95, 110-118, and Ser-122; these read GD, NIST, and KHGNRGISS. Gly-82 contacts anthranilate. Ser-94 contributes to the Mg(2+) binding site. Asn-113 is an anthranilate binding site. An anthranilate-binding site is contributed by Arg-168. Mg(2+) is bound by residues Asp-227 and Glu-228.

Belongs to the anthranilate phosphoribosyltransferase family. As to quaternary structure, homodimer. Requires Mg(2+) as cofactor.

It carries out the reaction N-(5-phospho-beta-D-ribosyl)anthranilate + diphosphate = 5-phospho-alpha-D-ribose 1-diphosphate + anthranilate. Its pathway is amino-acid biosynthesis; L-tryptophan biosynthesis; L-tryptophan from chorismate: step 2/5. In terms of biological role, catalyzes the transfer of the phosphoribosyl group of 5-phosphorylribose-1-pyrophosphate (PRPP) to anthranilate to yield N-(5'-phosphoribosyl)-anthranilate (PRA). In Vesicomyosocius okutanii subsp. Calyptogena okutanii (strain HA), this protein is Anthranilate phosphoribosyltransferase.